Here is a 793-residue protein sequence, read N- to C-terminus: Putative dipeptidyl aminopeptidase C2E11.08 (793 aa).

Residues M1 to R24 are Cytoplasmic-facing. Residues V25–V45 traverse the membrane as a helical; Signal-anchor for type II membrane protein segment. Residues S46–D793 lie on the Lumenal side of the membrane. N-linked (GlcNAc...) asparagine glycosylation is found at N101, N136, N246, N299, N303, N324, N336, N377, N384, N407, and N535. Active-site charge relay system residues include S647, D722, and H755. An N-linked (GlcNAc...) asparagine glycan is attached at N761.

Belongs to the peptidase S9B family.

The protein localises to the vacuole membrane. This chain is Putative dipeptidyl aminopeptidase C2E11.08, found in Schizosaccharomyces pombe (strain 972 / ATCC 24843) (Fission yeast).